A 155-amino-acid polypeptide reads, in one-letter code: Small ribosomal subunit protein uS9 (155 aa).

The protein belongs to the universal ribosomal protein uS9 family.

This chain is Small ribosomal subunit protein uS9, found in Sinorhizobium fredii (strain NBRC 101917 / NGR234).